The following is a 919-amino-acid chain: Glutamate receptor ionotropic, kainate 3 (919 aa).

Residues 1–31 (MTAPWRRLRSLVWEYWAGFLVCAFWIPDSRG) form the signal peptide. Residues 32–563 (MPHVIRIGGI…VFSFLNPLSP (532 aa)) lie on the Extracellular side of the membrane. Residues Asn70, Asn76, Asn278, Asn381, Asn415, Asn426, and Asn433 are each glycosylated (N-linked (GlcNAc...) asparagine). Cys99 and Cys350 are disulfide-bonded. L-glutamate is bound by residues Pro518, Thr520, and Arg525. Asn548 and Asn551 each carry an N-linked (GlcNAc...) asparagine glycan. A helical membrane pass occupies residues 564-584 (DIWMYVLLAYLGVSCVLFVIA). Residues 585–636 (RFSPYEWYDAHPCNPGSEVVENNFTLLNSFWFGMGSLMQQGSELMPKALSTR) are Cytoplasmic-facing. The helical transmembrane segment at 637–657 (IIGGIWWFFTLIIISSYTANL) threads the bilayer. Over 658 to 820 (AAFLTVERME…KEASALGIQK (163 aa)) the chain is Extracellular. Ala691, Thr692, and Glu739 together coordinate L-glutamate. Asn752 carries N-linked (GlcNAc...) asparagine glycosylation. A helical membrane pass occupies residues 821–841 (IGGIFIVLAAGLVLSVLVAVG). At 842–919 (EFIYKLRKTA…CSTSLAPVFP (78 aa)) the chain is on the cytoplasmic side. Ser869 carries the phosphoserine modification. Residue Lys887 forms a Glycyl lysine isopeptide (Lys-Gly) (interchain with G-Cter in SUMO1) linkage.

It belongs to the glutamate-gated ion channel (TC 1.A.10.1) family. GRIK3 subfamily. Homotetramer, and heterotetramer with GRIK4 or GRIK5. Can form functional heteromeric receptors with GRIK2. Interacts with PRKCABP. Interacts with NETO2. In terms of assembly, homomeric GluR7A forms functional kainate receptors which have very low sensitivity to glutamate. Can form functional heteromeric receptors with GRIK4 and GRIK5. As to quaternary structure, homomeric GluR7B forms functional kainate receptors. Mass spectrometry data suggest the protein is N-glycosylated at five distinct sites. In terms of tissue distribution, expressed in the olfactory bulb (at protein level). Expressed in the deep cortical layers, dentate gyrus, reticular thalamic nucleus, mammillary bodies, pons, and cerebellum of the adult.

Its subcellular location is the cell membrane. It localises to the postsynaptic cell membrane. It carries out the reaction Ca(2+)(in) = Ca(2+)(out). In terms of biological role, ionotropic glutamate receptor that functions as a cation-permeable ligand-gated ion channel, gated by L-glutamate and the glutamatergic agonist kainic acid. Binding of the excitatory neurotransmitter L-glutamate induces a conformation change, leading to the opening of the cation channel, and thereby converts the chemical signal to an electrical impulse. The receptor then desensitizes rapidly and enters a transient inactive state, characterized by the presence of bound agonist. In association with GRIK2, involved in presynaptic facilitation of glutamate release at hippocampal mossy fiber synapses. Functionally, ionotropic glutamate receptor that functions as a ligand-gated cation channel, gated by L-glutamate and the glutamatergic agonist kainic acid. The polypeptide is Glutamate receptor ionotropic, kainate 3 (Grik3) (Rattus norvegicus (Rat)).